The primary structure comprises 408 residues: LL-diaminopimelate aminotransferase (408 aa).

Substrate contacts are provided by Tyr15 and Gly42. Residues Tyr72, 108-109 (SK), Tyr132, Asn187, Tyr218, and 246-248 (SFS) contribute to the pyridoxal 5'-phosphate site. 3 residues coordinate substrate: Lys109, Tyr132, and Asn187. Residue Lys249 is modified to N6-(pyridoxal phosphate)lysine. Pyridoxal 5'-phosphate-binding residues include Arg257 and Asn292. Substrate contacts are provided by Asn292 and Arg388.

Belongs to the class-I pyridoxal-phosphate-dependent aminotransferase family. LL-diaminopimelate aminotransferase subfamily. Homodimer. Pyridoxal 5'-phosphate serves as cofactor.

It catalyses the reaction (2S,6S)-2,6-diaminopimelate + 2-oxoglutarate = (S)-2,3,4,5-tetrahydrodipicolinate + L-glutamate + H2O + H(+). The protein operates within amino-acid biosynthesis; L-lysine biosynthesis via DAP pathway; LL-2,6-diaminopimelate from (S)-tetrahydrodipicolinate (aminotransferase route): step 1/1. In terms of biological role, involved in the synthesis of meso-diaminopimelate (m-DAP or DL-DAP), required for both lysine and peptidoglycan biosynthesis. Catalyzes the direct conversion of tetrahydrodipicolinate to LL-diaminopimelate. The sequence is that of LL-diaminopimelate aminotransferase from Leptospira borgpetersenii serovar Hardjo-bovis (strain JB197).